The primary structure comprises 816 residues: Coiled-coil and C2 domain-containing protein 1-like (816 aa).

Positions M1–K11 are enriched in basic and acidic residues. Disordered stretches follow at residues M1 to P135, A157 to K176, and A186 to D269. Residues I25–A47 are compositionally biased toward acidic residues. The span at D73–V85 shows a compositional bias: basic and acidic residues. Over residues S86–L100 the composition is skewed to acidic residues. Positions P122–Q131 are enriched in low complexity. Positions I145–V200 are DM14 1. The span at P220–P243 shows a compositional bias: pro residues. 2 DM14 regions span residues S265–P317 and L365–P419. A coiled-coil region spans residues L355–E382. Positions V418–N492 are disordered. Over residues P424–V433 the composition is skewed to low complexity. Pro residues predominate over residues A434–T449. Low complexity predominate over residues A450–K471. Over residues T483–N492 the composition is skewed to polar residues. A DM14 4 region spans residues L502–P556. One can recognise a C2 domain in the interval R637–Y776.

The protein belongs to the CC2D1 family. In terms of assembly, interacts (via DM14 domains 1 and 3) with shrb; the interaction is direct and blocks access to the surface involved in shrb polymerization. This interaction may be required for the ESCRT-III complex role in multivesicular body formation.

Its subcellular location is the cytoplasm. The protein localises to the cytosol. It is found in the apicolateral cell membrane. The protein resides in the cell cortex. It localises to the endosome. In terms of biological role, phosphatidyl inositol monophosphate binding protein involved in endosomal protein sorting through regulation of the endosomal sorting required for transport (ESCRT) pathway. Required for full activity of the ESCRT-III complex core component shrb/shrub, probably by preventing its inappropriate polymerisation. Required, but not essential, for the efficient generation of intraluminal vesicles (ILVs) in multivesicular bodies (MVBs). Involved in a late stage of the endosomal pathway targeting transmembrane proteins of the plasma membrane for lysosomal degradation. Plays a critical role in regulation of multiple signal transduction pathways, including the Notch and BMP/decapentaplegic (dpp) signaling pathways, through targeting of membrane bound receptors to multivesicular bodies, isolating them from the cytoplasm and targeting them for lysosomal degradation. Involved in targeting N/Notch for endosomal degradation, negatively regulating the Notch signaling pathway. Regulates Notch signaling in imaginal disk cells and follicle cells during oogenesis and multiple developmental processes, including development of wings, veins, legs, eyes and bristles. Restricts the activity of Notch to the dorsoventral (D/V) boundary of the wing imaginal disk. In external sensory organ development regulates Notch signaling during asymmetric cell division and differentiation of sensory organ precursor cells. May be involved in regulation of apoptosis and cell growth independent of Notch signaling. Involved in targeting tkv for endosomal degradation, negatively regulating the BMP/decapentaplegic (dpp) signaling pathway. Regulates the BMP/dpp signaling pathway in follicle cells during oogenesis, but not in imaginal disk cells during wing development. May be involved in differentiation or morphogenesis of peripodial epithelial cells in the developing imaginal disk. Involved in abscission of germline cells during oogenesis. The protein is Coiled-coil and C2 domain-containing protein 1-like of Drosophila melanogaster (Fruit fly).